The sequence spans 945 residues: Xylanolytic transcriptional activator xlnR (945 aa).

The span at 1–23 (MSTPSIPQFTSSFSPFSSGSHST) shows a compositional bias: low complexity. 2 disordered regions span residues 1-32 (MSTPSIPQFTSSFSPFSSGSHSTGMAPSQTVG) and 53-118 (AAGT…APVR). The segment covering 73-84 (HTKDQPPFDNEK) has biased composition (basic and acidic residues). The segment at residues 125–151 (CDQCNQLRTKCDGQHPCAHCIEFGLTC) is a DNA-binding region (zn(2)-C6 fungal-type). Disordered regions lie at residues 172–210 (AAAATQGSNGHSGQANASLMGERTSEDSRPGQDVNGTYD) and 559–601 (PPNV…INVT). Residues 176-188 (TQGSNGHSGQANA) show a composition bias toward polar residues. Basic and acidic residues predominate over residues 565-581 (ARQDGERDGDGEADKRH).

The protein belongs to the xlnR/xlr1 family.

It is found in the nucleus. Its function is as follows. Transcriptional activator of the xylanolytic system. Involved in the regulation of extracellular cellulolytic and xylanolytic genes and in the regulation of the intracellular activities of D-xylose catabolic genes in the pentose catabolic pathway (PCP) in response to the presence of D-xylose. Binds to the DNA sequence 5'-GGNTAAA-3'. This Aspergillus niger protein is Xylanolytic transcriptional activator xlnR (xlnR).